The sequence spans 553 residues: Imidazole glycerol phosphate synthase hisHF (553 aa).

Positions 3-223 (TVHLLDYVAG…QLHSVTLEDS (221 aa)) constitute a Glutamine amidotransferase type-1 domain. Catalysis depends on for GATase activity residues C81, H194, and E196. Positions 232–553 (LTRRIIACLD…FLVRRFEPDV (322 aa)) are cyclase. Catalysis depends on residues D241 and D403.

This sequence in the C-terminal section; belongs to the HisA/HisF family.

The enzyme catalyses 5-[(5-phospho-1-deoxy-D-ribulos-1-ylimino)methylamino]-1-(5-phospho-beta-D-ribosyl)imidazole-4-carboxamide + L-glutamine = D-erythro-1-(imidazol-4-yl)glycerol 3-phosphate + 5-amino-1-(5-phospho-beta-D-ribosyl)imidazole-4-carboxamide + L-glutamate + H(+). The catalysed reaction is L-glutamine + H2O = L-glutamate + NH4(+). Its pathway is amino-acid biosynthesis; L-histidine biosynthesis; L-histidine from 5-phospho-alpha-D-ribose 1-diphosphate: step 5/9. Its function is as follows. IGPS catalyzes the conversion of PRFAR and glutamine to IGP, AICAR and glutamate. The glutaminase domain produces the ammonia necessary for the cyclase domain to produce IGP and AICAR from PRFAR. The ammonia is channeled to the active site of the cyclase domain. This is Imidazole glycerol phosphate synthase hisHF (hisHF) from Emericella nidulans (strain FGSC A4 / ATCC 38163 / CBS 112.46 / NRRL 194 / M139) (Aspergillus nidulans).